Consider the following 223-residue polypeptide: Ethylene-inducing xylanase 1 (223 aa).

The N-terminal stretch at Met1–Thr19 is a signal peptide. Positions Lys34–Ser223 constitute a GH11 domain. Glu119 (nucleophile) is an active-site residue. The interval Arg174–Asn184 is nuclear localization signal. The active-site Proton donor is Glu210.

Belongs to the glycosyl hydrolase 11 (cellulase G) family.

It is found in the secreted. It localises to the host nucleus. The enzyme catalyses Endohydrolysis of (1-&gt;4)-beta-D-xylosidic linkages in xylans.. Its pathway is glycan degradation; xylan degradation. Its function is as follows. Endo-1,4-beta-xylanase involved in the hydrolysis of xylan, a major structural heterogeneous polysaccharide found in plant biomass representing the second most abundant polysaccharide in the biosphere, after cellulose. Acts as an effector that localizes to the host nucleus to contribute to the virulence process. Induces host innate immunity responses; triggers BAK1-and SOBIR1-dependent cell death, salicylic acid signaling and jasmonic acid signaling. Does not exhibit any cell death when transiently expressed in N.benthamiana. In Verticillium dahliae (strain VdLs.17 / ATCC MYA-4575 / FGSC 10137) (Verticillium wilt), this protein is Ethylene-inducing xylanase 1.